A 384-amino-acid chain; its full sequence is 4-hydroxy-3-methylbut-2-en-1-yl diphosphate synthase (flavodoxin) (384 aa).

Residues C280, C283, C315, and E322 each contribute to the [4Fe-4S] cluster site.

It belongs to the IspG family. The cofactor is [4Fe-4S] cluster.

It carries out the reaction (2E)-4-hydroxy-3-methylbut-2-enyl diphosphate + oxidized [flavodoxin] + H2O + 2 H(+) = 2-C-methyl-D-erythritol 2,4-cyclic diphosphate + reduced [flavodoxin]. It functions in the pathway isoprenoid biosynthesis; isopentenyl diphosphate biosynthesis via DXP pathway; isopentenyl diphosphate from 1-deoxy-D-xylulose 5-phosphate: step 5/6. Converts 2C-methyl-D-erythritol 2,4-cyclodiphosphate (ME-2,4cPP) into 1-hydroxy-2-methyl-2-(E)-butenyl 4-diphosphate. This is 4-hydroxy-3-methylbut-2-en-1-yl diphosphate synthase (flavodoxin) from Frankia alni (strain DSM 45986 / CECT 9034 / ACN14a).